A 1348-amino-acid chain; its full sequence is Phosphoribosylformylglycinamidine synthase (1348 aa).

ATP-binding positions include 300-311 and Ala-701; that span reads GAATGAGGEIRD. 4 residues coordinate Mg(2+): Asp-702, Glu-741, Asn-745, and Asp-941. Residue Ser-943 coordinates ATP. A Glutamine amidotransferase type-1 domain is found at 1099 to 1348; that stretch reads VAILREQGVN…MFRNARVWCG (250 aa). The active-site Nucleophile is the Cys-1192. Residues His-1313 and Glu-1315 contribute to the active site.

In the N-terminal section; belongs to the FGAMS family. In terms of assembly, monomer.

Its subcellular location is the cytoplasm. It catalyses the reaction N(2)-formyl-N(1)-(5-phospho-beta-D-ribosyl)glycinamide + L-glutamine + ATP + H2O = 2-formamido-N(1)-(5-O-phospho-beta-D-ribosyl)acetamidine + L-glutamate + ADP + phosphate + H(+). It participates in purine metabolism; IMP biosynthesis via de novo pathway; 5-amino-1-(5-phospho-D-ribosyl)imidazole from N(2)-formyl-N(1)-(5-phospho-D-ribosyl)glycinamide: step 1/2. Its function is as follows. Phosphoribosylformylglycinamidine synthase involved in the purines biosynthetic pathway. Catalyzes the ATP-dependent conversion of formylglycinamide ribonucleotide (FGAR) and glutamine to yield formylglycinamidine ribonucleotide (FGAM) and glutamate. The protein is Phosphoribosylformylglycinamidine synthase of Xanthomonas campestris pv. campestris (strain ATCC 33913 / DSM 3586 / NCPPB 528 / LMG 568 / P 25).